The chain runs to 298 residues: Ribosomal protein L11 methyltransferase (298 aa).

S-adenosyl-L-methionine contacts are provided by Thr152, Gly173, Asp195, and Asn234.

It belongs to the methyltransferase superfamily. PrmA family.

The protein localises to the cytoplasm. The catalysed reaction is L-lysyl-[protein] + 3 S-adenosyl-L-methionine = N(6),N(6),N(6)-trimethyl-L-lysyl-[protein] + 3 S-adenosyl-L-homocysteine + 3 H(+). Its function is as follows. Methylates ribosomal protein L11. The chain is Ribosomal protein L11 methyltransferase from Ralstonia pickettii (strain 12J).